A 266-amino-acid chain; its full sequence is Proteasome subunit beta type-7 (266 aa).

Residues 1–34 (MENLNRGGFDFDLCNRNNVLEKTGLRMKGFMKTG) constitute a propeptide, removed in mature form. Threonine 35 functions as the Nucleophile in the catalytic mechanism.

It belongs to the peptidase T1B family. As to quaternary structure, the 26S proteasome consists of a 20S proteasome core and two 19S regulatory subunits. The 20S proteasome core is composed of 28 subunits that are arranged in four stacked rings, resulting in a barrel-shaped structure. The two end rings are each formed by seven alpha subunits, and the two central rings are each formed by seven beta subunits. The catalytic chamber with the active sites is on the inside of the barrel.

The protein resides in the cytoplasm. Its subcellular location is the nucleus. It carries out the reaction Cleavage of peptide bonds with very broad specificity.. Functionally, the proteasome is a multicatalytic proteinase complex which is characterized by its ability to cleave peptides with Arg, Phe, Tyr, Leu, and Glu adjacent to the leaving group at neutral or slightly basic pH. The proteasome has an ATP-dependent proteolytic activity. In Dictyostelium discoideum (Social amoeba), this protein is Proteasome subunit beta type-7 (psmB7).